Reading from the N-terminus, the 302-residue chain is Deoxyhypusine hydroxylase (302 aa).

HEAT-like PBS-type repeat units lie at residues 23-49, 54-80, 87-113, 175-201, 206-232, and 239-265; these read ERFR…AFDD, LKHE…VLKD, VRHE…YKQD, DRYR…GLKD, FRHE…NLED, and VRHE…YAED. His56, Glu57, His89, and Glu90 together coordinate Fe cation. The Fe cation site is built by His208, Glu209, His241, and Glu242.

The protein belongs to the deoxyhypusine hydroxylase family. The cofactor is Fe(2+).

Its subcellular location is the endoplasmic reticulum membrane. It carries out the reaction [eIF5A protein]-deoxyhypusine + AH2 + O2 = [eIF5A protein]-hypusine + A + H2O. The protein operates within protein modification; eIF5A hypusination. In terms of biological role, catalyzes the hydroxylation of the N(6)-(4-aminobutyl)-L-lysine intermediate to form hypusine, an essential post-translational modification only found in mature eIF-5A factor. Essential for organismal viability and plays a role in a wide number of important processes such as cell growth and proliferation, and regulates induction of autophagy and protein synthesis. Has a role in eIF-5A-mediated translational control. The protein is Deoxyhypusine hydroxylase of Drosophila melanogaster (Fruit fly).